Reading from the N-terminus, the 362-residue chain is S-adenosylmethionine:tRNA ribosyltransferase-isomerase (362 aa).

Belongs to the QueA family. In terms of assembly, monomer.

It localises to the cytoplasm. It catalyses the reaction 7-aminomethyl-7-carbaguanosine(34) in tRNA + S-adenosyl-L-methionine = epoxyqueuosine(34) in tRNA + adenine + L-methionine + 2 H(+). It functions in the pathway tRNA modification; tRNA-queuosine biosynthesis. Functionally, transfers and isomerizes the ribose moiety from AdoMet to the 7-aminomethyl group of 7-deazaguanine (preQ1-tRNA) to give epoxyqueuosine (oQ-tRNA). The chain is S-adenosylmethionine:tRNA ribosyltransferase-isomerase from Deinococcus radiodurans (strain ATCC 13939 / DSM 20539 / JCM 16871 / CCUG 27074 / LMG 4051 / NBRC 15346 / NCIMB 9279 / VKM B-1422 / R1).